The chain runs to 84 residues: uncharacterized protein (84 aa).

A run of 2 helical transmembrane segments spans residues 27-47 (INHH…LAML) and 52-72 (IGHV…FVLI).

To M.tuberculosis Rv2876.

The protein resides in the cell membrane. This is an uncharacterized protein from Mycobacterium leprae (strain TN).